Consider the following 209-residue polypeptide: High frequency lysogenization protein HflD homolog (209 aa).

This sequence belongs to the HflD family.

The protein localises to the cytoplasm. Its subcellular location is the cell inner membrane. The chain is High frequency lysogenization protein HflD homolog from Proteus mirabilis (strain HI4320).